An 87-amino-acid polypeptide reads, in one-letter code: Large ribosomal subunit protein bL31B (87 aa).

Belongs to the bacterial ribosomal protein bL31 family. Type B subfamily. In terms of assembly, part of the 50S ribosomal subunit.

The polypeptide is Large ribosomal subunit protein bL31B (Escherichia coli O8 (strain IAI1)).